We begin with the raw amino-acid sequence, 285 residues long: Putative lipoprotein SCO4650 (285 aa).

The first 20 residues, Met-1–Ala-20, serve as a signal peptide directing secretion. Cys-21 carries the N-palmitoyl cysteine lipid modification. Residue Cys-21 is the site of S-diacylglycerol cysteine attachment. Positions Gly-27 to Ser-63 are disordered. Residues Ser-43–Ala-58 show a composition bias toward low complexity.

Its subcellular location is the cell membrane. This Streptomyces coelicolor (strain ATCC BAA-471 / A3(2) / M145) protein is Putative lipoprotein SCO4650.